Here is a 114-residue protein sequence, read N- to C-terminus: MRLWFCLSFFIVLCLEHFPGTLADERNNRDYTIRTRLHGHHKPSRNNRYAIKTSIHGHHIPRNVPESEEKTEQFLRDLPKINRKGPRPPGFSPFRGKFHSQSLRQIPGLGPLRG.

An N-terminal signal peptide occupies residues 1 to 23 (MRLWFCLSFFIVLCLEHFPGTLA). Positions 35 to 45 (TRLHGHHKPSR) are enriched in basic residues. Positions 35–114 (TRLHGHHKPS…QIPGLGPLRG (80 aa)) are disordered. Positions 65 to 80 (PESEEKTEQFLRDLPK) are enriched in basic and acidic residues. Residue arginine 113 is modified to Arginine amide.

It belongs to the bradykinin-related peptide family. Expressed by the skin glands.

Its subcellular location is the secreted. Its function is as follows. Potent vasodilator. Binds B1 (BDKRB1) and B2 (BDKRB2) bradykinin receptors. This is Kininogen-2 from Bombina maxima (Giant fire-bellied toad).